The sequence spans 49 residues: L-amino-acid oxidase (49 aa).

An FAD-binding site is contributed by 43–44 (MS).

Belongs to the flavin monoamine oxidase family. FIG1 subfamily. In terms of assembly, homodimer; non-covalently linked. Requires FAD as cofactor. In terms of processing, N-glycosylated. In terms of tissue distribution, expressed by the venom gland.

The protein resides in the secreted. It catalyses the reaction an L-alpha-amino acid + O2 + H2O = a 2-oxocarboxylate + H2O2 + NH4(+). It carries out the reaction L-leucine + O2 + H2O = 4-methyl-2-oxopentanoate + H2O2 + NH4(+). In terms of biological role, catalyzes an oxidative deamination of predominantly hydrophobic and aromatic L-amino acids, thus producing hydrogen peroxide that may contribute to the diverse toxic effects of this enzyme. Shows activity on L-Leu. Exhibits diverse biological activities, such as hemorrhage, hemolysis, edema, antibacterial and antiparasitic activities, as well as regulation of platelet aggregation. Its effect on platelets is controversial, since it either induces aggregation or inhibits agonist-induced aggregation. These different effects are probably due to different experimental conditions. In addition, this protein induces apoptosis and necrosis and has inhibitory effects on rat kidney function (decrease of blood flow and glomerular filtration). In Bothrops insularis (Golden lancehead), this protein is L-amino-acid oxidase.